The primary structure comprises 219 residues: ATP-dependent Clp protease proteolytic subunit 1, mitochondrial (219 aa).

Residues 1-23 constitute a mitochondrion transit peptide; sequence MLRRILTTSSVRNLTSSTQARVG. The Nucleophile role is filled by Ser118. The active site involves His143.

The protein belongs to the peptidase S14 family. In terms of assembly, tetradecamer that assembles into a two heptameric rings with a central cavity.

It is found in the mitochondrion matrix. It carries out the reaction Hydrolysis of proteins to small peptides in the presence of ATP and magnesium. alpha-casein is the usual test substrate. In the absence of ATP, only oligopeptides shorter than five residues are hydrolyzed (such as succinyl-Leu-Tyr-|-NHMec, and Leu-Tyr-Leu-|-Tyr-Trp, in which cleavage of the -Tyr-|-Leu- and -Tyr-|-Trp bonds also occurs).. Its function is as follows. Clp cleaves peptides in various proteins in a process that requires ATP hydrolysis. Clp may be responsible for a fairly general and central housekeeping function rather than for the degradation of specific substrates. In Caenorhabditis briggsae, this protein is ATP-dependent Clp protease proteolytic subunit 1, mitochondrial.